The primary structure comprises 152 residues: Aspartate-rich protein (152 aa).

An N-terminal signal peptide occupies residues 1 to 19 (MQKLLLAVLFFSLLAVATA). Basic and acidic residues predominate over residues 82-113 (ATPKTEAEPGSLDKGEGTKGEKGKEGKKEKGE). The segment at 82–152 (ATPKTEAEPG…VHENDDENED (71 aa)) is disordered. Over residues 135–152 (DDDDDRDDVHENDDENED) the composition is skewed to acidic residues.

As to expression, prismatic layer of shell (at protein level). Expressed primarily in the mantle with highest level in the mantle edge and lower level in the mantle pallium.

It localises to the secreted. This is Aspartate-rich protein from Margaritifera margaritifera (Freshwater pearl mussel).